The sequence spans 339 residues: SVP1-like protein 2 (339 aa).

WD repeat units lie at residues 177–217 and 222–261; these read AHAN…LVRE and LDRT…ENKR.

Belongs to the WD repeat PROPPIN family.

Its subcellular location is the vacuole membrane. It localises to the cytoplasmic vesicle membrane. Involved in mitochondrial or peroxisomal functions and amino acid signaling pathways. This is SVP1-like protein 2 (HSV2) from Kluyveromyces lactis (strain ATCC 8585 / CBS 2359 / DSM 70799 / NBRC 1267 / NRRL Y-1140 / WM37) (Yeast).